Here is a 58-residue protein sequence, read N- to C-terminus: uncharacterized protein (58 aa).

The helical transmembrane segment at 18-38 threads the bilayer; sequence WLMIVLLFCSTGMVFLATILE.

It localises to the membrane. This is an uncharacterized protein from Saccharomyces cerevisiae (strain ATCC 204508 / S288c) (Baker's yeast).